The primary structure comprises 318 residues: Malate dehydrogenase (318 aa).

Residues 10–15 (GAGNIG) and aspartate 34 each bind NAD(+). Substrate contacts are provided by arginine 83 and arginine 89. NAD(+)-binding positions include asparagine 96 and 119 to 121 (ITN). Positions 121 and 152 each coordinate substrate. Histidine 176 acts as the Proton acceptor in catalysis.

The protein belongs to the LDH/MDH superfamily. MDH type 3 family.

The enzyme catalyses (S)-malate + NAD(+) = oxaloacetate + NADH + H(+). Its function is as follows. Catalyzes the reversible oxidation of malate to oxaloacetate. The chain is Malate dehydrogenase from Rhodospirillum rubrum (strain ATCC 11170 / ATH 1.1.1 / DSM 467 / LMG 4362 / NCIMB 8255 / S1).